Reading from the N-terminus, the 289-residue chain is ATP synthase gamma chain (289 aa).

The protein belongs to the ATPase gamma chain family. In terms of assembly, F-type ATPases have 2 components, CF(1) - the catalytic core - and CF(0) - the membrane proton channel. CF(1) has five subunits: alpha(3), beta(3), gamma(1), delta(1), epsilon(1). CF(0) has three main subunits: a, b and c.

It localises to the cell membrane. Produces ATP from ADP in the presence of a proton gradient across the membrane. The gamma chain is believed to be important in regulating ATPase activity and the flow of protons through the CF(0) complex. This is ATP synthase gamma chain from Lawsonia intracellularis (strain PHE/MN1-00).